Consider the following 159-residue polypeptide: Ribosome maturation factor RimM (159 aa).

The 74-residue stretch at 86–159 folds into the PRC barrel domain; that stretch reads SDAFHLPKLI…IHIETIEGLI (74 aa).

This sequence belongs to the RimM family. As to quaternary structure, binds ribosomal protein uS19.

It localises to the cytoplasm. In terms of biological role, an accessory protein needed during the final step in the assembly of 30S ribosomal subunit, possibly for assembly of the head region. Essential for efficient processing of 16S rRNA. May be needed both before and after RbfA during the maturation of 16S rRNA. It has affinity for free ribosomal 30S subunits but not for 70S ribosomes. The sequence is that of Ribosome maturation factor RimM from Acholeplasma laidlawii (strain PG-8A).